The following is a 594-amino-acid chain: Homeobox protein prospero homolog 1 (594 aa).

2 stretches are compositionally biased toward polar residues: residues 1-13 and 36-50; these read MSSGLPSIAATAQ and PPVNSNGSTPNSSNR. 3 disordered regions span residues 1-20, 30-180, and 358-389; these read MSSGLPSIAATAQPSANGFS, IYYS…FQPQ, and DTSSEMKKKRTKVEIKKEDAMSSRASPLSASA. Positions 73–101 are enriched in low complexity; the sequence is STSVSSNSSSSSSTSNTNSTPSSSSTSSK. Residues 105-117 are compositionally biased toward polar residues; sequence EGMTETETMTASI. A compositionally biased stretch (basic and acidic residues) spans 118–135; the sequence is EQEKVIQNEESEAGKDGM. Acidic residues predominate over residues 136-162; that stretch reads EEHDDGMNDFEIIDDTNDEVEESEERE. The span at 369–378 shows a compositional bias: basic and acidic residues; it reads KVEIKKEDAM. Over residues 379–389 the composition is skewed to low complexity; sequence SSRASPLSASA. Residues 435-493 enclose the Prospero-type homeo domain; that stretch reads SSMLTPMHLRKAKLMFFYTRYPNSNLLKSYFPDIRFNKNNTAQLVKWFSNFREFYYNQM. The homeo-Prospero stretch occupies residues 435–593; the sequence is SSMLTPMHLR…KEPNFLERLE (159 aa). Positions 494-593 constitute a Prospero domain; sequence EKFARQALAE…KEPNFLERLE (100 aa).

It belongs to the Prospero homeodomain family.

The protein localises to the nucleus. Transcription factor involved in developmental processes. Controls the transcription of genes required for excretory canal formation. This chain is Homeobox protein prospero homolog 1, found in Caenorhabditis elegans.